Consider the following 405-residue polypeptide: Argininosuccinate synthase (405 aa).

ATP-binding positions include 10–18 and alanine 37; that span reads AYSGGLDTS. 2 residues coordinate L-citrulline: tyrosine 88 and serine 93. Residue glycine 118 coordinates ATP. L-aspartate-binding residues include threonine 120, asparagine 124, and aspartate 125. Residue asparagine 124 participates in L-citrulline binding. L-citrulline-binding residues include arginine 128, serine 179, serine 188, glutamate 264, and tyrosine 276.

The protein belongs to the argininosuccinate synthase family. Type 1 subfamily. As to quaternary structure, homotetramer.

Its subcellular location is the cytoplasm. It carries out the reaction L-citrulline + L-aspartate + ATP = 2-(N(omega)-L-arginino)succinate + AMP + diphosphate + H(+). It participates in amino-acid biosynthesis; L-arginine biosynthesis; L-arginine from L-ornithine and carbamoyl phosphate: step 2/3. This chain is Argininosuccinate synthase, found in Stutzerimonas stutzeri (strain A1501) (Pseudomonas stutzeri).